A 185-amino-acid polypeptide reads, in one-letter code: UPF0301 protein IL2218 (185 aa).

The protein belongs to the UPF0301 (AlgH) family.

The chain is UPF0301 protein IL2218 from Idiomarina loihiensis (strain ATCC BAA-735 / DSM 15497 / L2-TR).